We begin with the raw amino-acid sequence, 153 residues long: Arginine repressor (153 aa).

This sequence belongs to the ArgR family.

Its subcellular location is the cytoplasm. The protein operates within amino-acid biosynthesis; L-arginine biosynthesis [regulation]. Regulates arginine biosynthesis genes. The chain is Arginine repressor from Glaesserella parasuis serovar 5 (strain SH0165) (Haemophilus parasuis).